Reading from the N-terminus, the 412-residue chain is Intraflagellar transport protein che-13 (412 aa).

Disordered stretches follow at residues 1 to 21 (MEEE…GSAI) and 162 to 193 (PPKE…NFLD). Acidic residues predominate over residues 165–193 (EEDEDTAVDEQDEDDDNDDIVEEPMNFLD). A coiled-coil region spans residues 302–393 (QLASMMSKFR…VQIGVFEQSI (92 aa)).

It belongs to the IFT57 family. As to quaternary structure, component of the IFT complex B composed of at least che-2, che-13, dyf-1, dyf-3, dyf-6, dyf-11, dyf-13, ift-20, ift-74, ift-81, ifta-2, osm-1, osm-5 and osm-6.

Its subcellular location is the cytoplasm. It is found in the cytoskeleton. It localises to the cilium axoneme. Functionally, component of the intraflagellar transport (IFT) complex B required for transport of proteins in the motile cilium. May be required for ciliary entrance and transport of specific ciliary cargo proteins such as che-3 which are related to motility. Required for the formation of chemosensory cilia that detect chemosensory cues. This chain is Intraflagellar transport protein che-13, found in Caenorhabditis elegans.